The following is a 385-amino-acid chain: Rubredoxin-NAD(+) reductase (385 aa).

FAD is bound by residues 8–11 (AGTA), 32–33 (SR), isoleucine 79, glutamate 156, aspartate 275, and isoleucine 293.

Belongs to the FAD-dependent oxidoreductase family. As to quaternary structure, homodimer. FAD is required as a cofactor.

It localises to the cytoplasm. It catalyses the reaction 2 reduced [rubredoxin] + NAD(+) + H(+) = 2 oxidized [rubredoxin] + NADH. The protein operates within hydrocarbon metabolism; alkane degradation. In terms of biological role, involved in the hydrocarbon hydroxylating system, which transfers electrons from NADH to rubredoxin reductase and then through rubredoxin to alkane 1 monooxygenase. The polypeptide is Rubredoxin-NAD(+) reductase (alkT) (Pseudomonas putida (Arthrobacter siderocapsulatus)).